A 996-amino-acid chain; its full sequence is GPI ethanolamine phosphate transferase 1 (996 aa).

Topologically, residues 1–8 (MAAFPRFR) are cytoplasmic. A helical membrane pass occupies residues 9-29 (FLAIAVIFHFAYIFSIFDIYF). Residues 30-463 (VSPIETGMRL…LQTYDWLFLR (434 aa)) are Lumenal-facing. Asn-47, Asn-147, and Asn-210 each carry an N-linked (GlcNAc...) asparagine glycan. Residues 464–484 (ALITIGYLGWIAYALTTVVDL) form a helical membrane-spanning segment. The Cytoplasmic segment spans residues 485 to 495 (HVLHGRVRPSR). The helical transmembrane segment at 496-516 (TLGGGLFFTSVLVALYASLVI) threads the bilayer. Residues 517–518 (SK) are Lumenal-facing. Residues 519–539 (SPLTYYVYAFFPVFFWEEVYA) traverse the membrane as a helical segment. The Cytoplasmic portion of the chain corresponds to 540-560 (HRESLAAGRKELLGHINSGGS). The chain crosses the membrane as a helical span at residues 561 to 581 (VASFVLNSALYVGVIESLALG). Residues 582 to 586 (YIHRE) are Lumenal-facing. A helical transmembrane segment spans residues 587 to 607 (ILSVLFVLGSFWPFTHGLSFL). Residues 608–612 (KKHGA) lie on the Cytoplasmic side of the membrane. A helical transmembrane segment spans residues 613–633 (LSATWFLACIAMSTFTLLPAM). Residues 634–637 (KAEN) lie on the Lumenal side of the membrane. Residues 638–658 (VNLITIGGVLMVVIGLLYLIF) traverse the membrane as a helical segment. Residues 659–681 (EDFVLADFSWNAKPTSRNHLSRS) lie on the Cytoplasmic side of the membrane. Residues 682–702 (LVGIQVGLTVLSIIITRSSAL) form a helical membrane-spanning segment. Residues 703–715 (SLQAKQGLPRGNQ) lie on the Lumenal side of the membrane. A helical membrane pass occupies residues 716-734 (IMGWVTLVASLLMPLAYRL). Topologically, residues 735 to 754 (RPNNHYMHRILVIFLTCAPT) are cytoplasmic. The helical transmembrane segment at 755-775 (FVILTISYEGLFYLVFSALLV) threads the bilayer. Residues 776-822 (SWVRLEHAVQKFTSSKAPQTAATKKPTTTTESHLPAPFRPLTLHDAR) lie on the Lumenal side of the membrane. Residues 823–843 (VALFFFILLQSAFFSTGNVAS) traverse the membrane as a helical segment. The Cytoplasmic segment spans residues 844–865 (VSSFSLDSVYRLIPIFDPFSQG). A helical membrane pass occupies residues 866–886 (AMLILKLMIPFALISANLGIL). At 887–895 (NKRLGVAPS) the chain is on the lumenal side. Residues 896–916 (ALFMVVMGISDILTLYFFWVV) form a helical membrane-spanning segment. Topologically, residues 917–932 (KDEGSWLEIGSTISHF) are cytoplasmic. Residues 933–953 (VIASLLCVFVSALEPVSAAFI) traverse the membrane as a helical segment. Residues 954 to 996 (AGVEVGEESELKEEGKVAEKVVEKVNEAVEGLVSGGDGGGDES) are Lumenal-facing.

It belongs to the PIGG/PIGN/PIGO family. PIGN subfamily.

The protein resides in the endoplasmic reticulum membrane. Its pathway is glycolipid biosynthesis; glycosylphosphatidylinositol-anchor biosynthesis. Its function is as follows. Ethanolamine phosphate transferase involved in glycosylphosphatidylinositol-anchor biosynthesis. Transfers ethanolamine phosphate to the first alpha-1,4-linked mannose of the glycosylphosphatidylinositol precursor of GPI-anchor. This chain is GPI ethanolamine phosphate transferase 1 (mcd-4), found in Neurospora crassa (strain ATCC 24698 / 74-OR23-1A / CBS 708.71 / DSM 1257 / FGSC 987).